Reading from the N-terminus, the 479-residue chain is Cardiolipin synthase A (479 aa).

2 helical membrane passes run 8–28 and 38–58; these read IFGYLIALLHFLGLIAAIHAV and IAWALSLLFMPYLTLIPYLVF. PLD phosphodiesterase domains are found at residues 218–245 and 392–419; these read VNFRNHRKIVVVDGMLGFVGGHNVGDEY and QPGFLHQKVVLIDNEISAIGSANLDNRS. Active-site residues include His223, Lys225, Asp230, His397, Lys399, and Asp404.

This sequence belongs to the phospholipase D family. Cardiolipin synthase subfamily. ClsA sub-subfamily.

It localises to the cell inner membrane. The catalysed reaction is 2 a 1,2-diacyl-sn-glycero-3-phospho-(1'-sn-glycerol) = a cardiolipin + glycerol. Functionally, catalyzes the reversible phosphatidyl group transfer from one phosphatidylglycerol molecule to another to form cardiolipin (CL) (diphosphatidylglycerol) and glycerol. This Pseudomonas fluorescens (strain ATCC BAA-477 / NRRL B-23932 / Pf-5) protein is Cardiolipin synthase A.